A 177-amino-acid polypeptide reads, in one-letter code: Large ribosomal subunit protein uL6 (177 aa).

This sequence belongs to the universal ribosomal protein uL6 family. As to quaternary structure, part of the 50S ribosomal subunit.

This protein binds to the 23S rRNA, and is important in its secondary structure. It is located near the subunit interface in the base of the L7/L12 stalk, and near the tRNA binding site of the peptidyltransferase center. The chain is Large ribosomal subunit protein uL6 from Enterobacter sp. (strain 638).